Consider the following 156-residue polypeptide: Small ribosomal subunit protein uS7 (156 aa).

It belongs to the universal ribosomal protein uS7 family. As to quaternary structure, part of the 30S ribosomal subunit. Contacts proteins S9 and S11.

One of the primary rRNA binding proteins, it binds directly to 16S rRNA where it nucleates assembly of the head domain of the 30S subunit. Is located at the subunit interface close to the decoding center, probably blocks exit of the E-site tRNA. This Parvibaculum lavamentivorans (strain DS-1 / DSM 13023 / NCIMB 13966) protein is Small ribosomal subunit protein uS7.